Reading from the N-terminus, the 838-residue chain is Translation initiation factor IF-2 (838 aa).

2 disordered regions span residues 30 to 60 (PHTAAEEHVSDSEKQSLLTHLKSSHKAKVEE) and 94 to 254 (QRSP…PTGP). Composition is skewed to basic and acidic residues over residues 33 to 43 (AAEEHVSDSEK) and 96 to 136 (SPEE…EARR). Residues 137-173 (QPAPVAEPVAAQAAAPAPAPVVEPVQEAPVATAAPAA) are compositionally biased toward low complexity. 2 stretches are compositionally biased toward basic and acidic residues: residues 174–214 (DARK…EKAP) and 222–231 (TTDEESDGFR). Residues 232–245 (RGGRGKAKLKKRNA) show a composition bias toward basic residues. The region spanning 338–507 (ARAPVVTVMG…LLQAEVLELK (170 aa)) is the tr-type G domain. Residues 347–354 (GHVDHGKT) are G1. GTP is bound at residue 347–354 (GHVDHGKT). The G2 stretch occupies residues 372-376 (GITQH). The interval 393 to 396 (DTPG) is G3. GTP-binding positions include 393 to 397 (DTPGH) and 447 to 450 (NKID). The segment at 447–450 (NKID) is G4. Residues 483-485 (SAK) are G5.

It belongs to the TRAFAC class translation factor GTPase superfamily. Classic translation factor GTPase family. IF-2 subfamily.

It is found in the cytoplasm. In terms of biological role, one of the essential components for the initiation of protein synthesis. Protects formylmethionyl-tRNA from spontaneous hydrolysis and promotes its binding to the 30S ribosomal subunits. Also involved in the hydrolysis of GTP during the formation of the 70S ribosomal complex. This chain is Translation initiation factor IF-2, found in Pseudomonas fluorescens (strain ATCC BAA-477 / NRRL B-23932 / Pf-5).